Consider the following 596-residue polypeptide: Elongation factor 4 (596 aa).

A tr-type G domain is found at 2-184 (KNIRNFAIIA…SIVKYIPPPE (183 aa)). Residues 14–19 (DHGKST) and 131–134 (NKID) contribute to the GTP site.

This sequence belongs to the TRAFAC class translation factor GTPase superfamily. Classic translation factor GTPase family. LepA subfamily.

It localises to the cell inner membrane. The catalysed reaction is GTP + H2O = GDP + phosphate + H(+). Functionally, required for accurate and efficient protein synthesis under certain stress conditions. May act as a fidelity factor of the translation reaction, by catalyzing a one-codon backward translocation of tRNAs on improperly translocated ribosomes. Back-translocation proceeds from a post-translocation (POST) complex to a pre-translocation (PRE) complex, thus giving elongation factor G a second chance to translocate the tRNAs correctly. Binds to ribosomes in a GTP-dependent manner. The chain is Elongation factor 4 from Neorickettsia sennetsu (strain ATCC VR-367 / Miyayama) (Ehrlichia sennetsu).